The primary structure comprises 362 residues: Inactive 2'-5' oligoadenylate synthetase 1C (362 aa).

Belongs to the 2-5A synthase family. Expressed at highest level in brain with lesser amounts in spleen, kidney, stomach, liver, intestine, ovary, skin and testis. Not detected in lung, thymus, heart and uterus.

Functionally, does not have 2'-5'-OAS activity, but can bind double-stranded RNA. In Mus musculus (Mouse), this protein is Inactive 2'-5' oligoadenylate synthetase 1C.